Consider the following 471-residue polypeptide: Tryptophanase (471 aa).

An N6-(pyridoxal phosphate)lysine modification is found at Lys270.

The protein belongs to the beta-eliminating lyase family. Homotetramer. Pyridoxal 5'-phosphate serves as cofactor.

The enzyme catalyses L-tryptophan + H2O = indole + pyruvate + NH4(+). It functions in the pathway amino-acid degradation; L-tryptophan degradation via pyruvate pathway; indole and pyruvate from L-tryptophan: step 1/1. This is Tryptophanase from Histophilus somni (strain 129Pt) (Haemophilus somnus).